We begin with the raw amino-acid sequence, 1249 residues long: Apoptotic protease-activating factor 1 (1249 aa).

The CARD domain maps to 1-90 (MDAKARNCLL…KDLAGLLHSG (90 aa)). Residues 106-415 (NTSFVRTVLC…LETEEVEDIL (310 aa)) form the NB-ARC domain. ATP contacts are provided by residues 154 to 161 (GMAGCGKS) and arginine 265. The stretch at 613–652 (PHTDAVYHACFSQDGQRIASCGADKTLQVFKAETGEKLLD) is one WD 1-1 repeat. A WD 1-2 repeat occupies 655 to 694 (AHEDEVLCCAFSSDDSYIATCSVDKKVKIWDSGTGKLVHT). The stretch at 697-738 (EHSEQVNCCHFTNKSNHLLLATGSNDSFLKLWDLNQKECRNT) is one WD 1-3 repeat. One copy of the WD 1-4 repeat lies at 741–780 (GHTNSVTHCRFSPDDELLASCSADGTLKLWDVRSANEKKS). A WD 1-5 repeat occupies 796-837 (DVEVIVKCCSWSADGDRIIVAAKNKVLLLDIHTSGLLTEIHT). Residues 838–877 (GHHSTIQYCDFSPYDHLAVIALSQYCVELWNIDSRVKVAD) form a WD 1-6 repeat. One copy of the WD 1-7 repeat lies at 880–910 (GHLSWVHGVMFSPDGSSFLTASDDQTIRVWE). The tract at residues 910–921 (ETRKVCKNSAIV) is interpropeller linker. A WD 2-1 repeat occupies 922–958 (LKQEIDVVFQENEMMVLAVDNIRGLQLIAGKTGQIDY). The stretch at 959–998 (LPEAQVSCCCLSPHLEYVAFGDEEGAIKIIELPNNRVFSS) is one WD 2-2 repeat. Residues 1001–1040 (GHKKAVRHIQFTADGKTLISSSEDSVIQVWNWQTEEYVFL) form a WD 2-3 repeat. One copy of the WD 2-4 repeat lies at 1042-1080 (AHQETVKDFRLLRDSRLLSWSFDGTVKVWNVITGRIERD). The stretch at 1083-1122 (CHQGTVLSCAISSDATKFSSTSADKTAKIWSFELPSPLHE) is one WD 2-5 repeat. The stretch at 1125–1164 (GHNSCVRCSAFSLDGILLATGDDNGEIRIWNVSDGQLLHL) is one WD 2-6 repeat. One copy of the WD 2-7 repeat lies at 1176–1213 (THGGWVTDVCFSPDRKMLVSAGGYLKWWNVVTGESSQT). One copy of the WD 2-8 repeat lies at 1214-1249 (FYTNGTNLKKIHVSPDFRTYVTVDNLGILYILQVLE).

Monomer. Oligomerizes to a heptameric ring, known as the apoptosome, upon binding of cytochrome c and dATP. Oligomeric Apaf-1 and pro-caspase-9 bind to each other via their respective NH2-terminal CARD domains. Interacts with UACA. Interacts with APIP. Interacts (via CARD and NACHT domains) with NAIP/BIRC1 (via NACHT domain). Interacts with CIAO2A.

It is found in the cytoplasm. Regulates programmed cell death; necessary for normal brain development. Participates with pro-caspase-9 (Apaf-3) in the cytochrome c-dependent activation of caspase-3, leading to apoptosis. This activation requires ATP. In Rattus norvegicus (Rat), this protein is Apoptotic protease-activating factor 1 (Apaf1).